The following is an 87-amino-acid chain: Small ribosomal subunit protein bS20 (87 aa).

Residues 1–27 are disordered; the sequence is MANIKSAKKRALQSEKRRQHNASRRSM.

The protein belongs to the bacterial ribosomal protein bS20 family.

In terms of biological role, binds directly to 16S ribosomal RNA. This is Small ribosomal subunit protein bS20 from Aeromonas hydrophila subsp. hydrophila (strain ATCC 7966 / DSM 30187 / BCRC 13018 / CCUG 14551 / JCM 1027 / KCTC 2358 / NCIMB 9240 / NCTC 8049).